The following is a 115-amino-acid chain: Nascent polypeptide-associated complex protein (115 aa).

The 67-residue stretch at 6 to 72 (PMNPKQLKKL…SEEEKAIINI (67 aa)) folds into the NAC-A/B domain.

This sequence belongs to the NAC-alpha family. In terms of assembly, homodimer. Interacts with the ribosome. Binds ribosomal RNA.

In terms of biological role, contacts the emerging nascent chain on the ribosome. In Pyrococcus horikoshii (strain ATCC 700860 / DSM 12428 / JCM 9974 / NBRC 100139 / OT-3), this protein is Nascent polypeptide-associated complex protein.